We begin with the raw amino-acid sequence, 141 residues long: Large ribosomal subunit protein uL11 (141 aa).

Belongs to the universal ribosomal protein uL11 family. As to quaternary structure, part of the ribosomal stalk of the 50S ribosomal subunit. Interacts with L10 and the large rRNA to form the base of the stalk. L10 forms an elongated spine to which L12 dimers bind in a sequential fashion forming a multimeric L10(L12)X complex. In terms of processing, one or more lysine residues are methylated.

In terms of biological role, forms part of the ribosomal stalk which helps the ribosome interact with GTP-bound translation factors. This Helicobacter pylori (strain P12) protein is Large ribosomal subunit protein uL11.